A 548-amino-acid chain; its full sequence is pH-responsive protein 1 (548 aa).

Residues Met1–Ala20 form the signal peptide. Asn41 is a glycosylation site (N-linked (GlcNAc...) asparagine). An intrachain disulfide couples Cys82 to Cys111. N-linked (GlcNAc...) asparagine glycans are attached at residues Asn173 and Asn261. 5 disulfide bridges follow: Cys224–Cys358, Cys242–Cys273, Cys381–Cys432, Cys390–Cys456, and Cys409–Cys414. The interval Gly483–Gly518 is disordered. Ser517 carries GPI-anchor amidated serine lipidation. The propeptide at Gly518–Phe548 is removed in mature form.

This sequence belongs to the glycosyl hydrolase 72 family.

It localises to the cell membrane. Its function is as follows. Required for apical cell growth and plays an essential role in morphogenesis. May be integral to the pathogenic ability of the organism. The sequence is that of pH-responsive protein 1 (PHR1) from Candida albicans (strain SC5314 / ATCC MYA-2876) (Yeast).